A 404-amino-acid chain; its full sequence is Glycosylated lysosomal membrane protein (404 aa).

The N-terminal stretch at 1-35 (MFRCWGPHWGWVPCAPTPWLLLSLLVCSAPFGLQG) is a signal peptide. At 36–370 (EETRQVSMEV…VDIFSPLVLG (335 aa)) the chain is on the lumenal side. N-linked (GlcNAc...) asparagine glycans are attached at residues asparagine 64, asparagine 85, asparagine 94, asparagine 133, asparagine 157, asparagine 166, asparagine 185, asparagine 228, and asparagine 331. Residues 371–391 (IMAVALGAPGLMFLGGGLFLL) form a helical membrane-spanning segment. The Cytoplasmic portion of the chain corresponds to 392–404 (LRHRRYSEYQSIN). Positions 400–404 (YQSIN) match the Lysosomal targeting motif motif.

The protein belongs to the GLMP family. Interacts (via lumenal domain) with lysosomal protein MFSD1; the interaction starts while both proteins are still in the endoplasmic reticulum and is required for stabilization of MFSD1 in lysosomes but has no direct effect on its targeting to lysosomes or transporter activity. Post-translationally, highly N-glycosylated. N-glycosylation is essential for GLMP stability and for MFSD1 lysosomal localization. In terms of tissue distribution, detected in brain, heart, liver, kidney, lung, intestine, testis and spleen. Expressed at highest levels in kidney cortex. However, another study reports highest expression levels in lung. Expressed in myoblasts with expression increasing during differentiation into myotubes.

Its subcellular location is the lysosome membrane. Functionally, required to protect lysosomal transporter MFSD1 from lysosomal proteolysis and for MFSD1 lysosomal localization. In Mus musculus (Mouse), this protein is Glycosylated lysosomal membrane protein.